Reading from the N-terminus, the 375-residue chain is 4,4'-diaponeurosporenoate glycosyltransferase (375 aa).

Helical transmembrane passes span 7–23, 112–132, 280–300, and 333–353; these read LLHASTGLSLISGYLMY, ACYLGASYTVSDILIFMDADV, IMMLIILWMVGCITSFSGLAL, and FSILFLAINSILFLVFILVYI.

The protein belongs to the glycosyltransferase 2 family. CrtQ subfamily.

It is found in the cell membrane. Its pathway is carotenoid biosynthesis; staphyloxanthin biosynthesis; staphyloxanthin from farnesyl diphosphate: step 4/5. In terms of biological role, catalyzes the glycosylation of 4,4'-diaponeurosporenoate, i.e. the esterification of glucose at the C1'' position with the carboxyl group of 4,4'-diaponeurosporenic acid, to form glycosyl-4,4'-diaponeurosporenoate. This is a step in the biosynthesis of staphyloxanthin, an orange pigment present in most staphylococci strains. The sequence is that of 4,4'-diaponeurosporenoate glycosyltransferase (crtQ) from Staphylococcus haemolyticus (strain JCSC1435).